We begin with the raw amino-acid sequence, 700 residues long: Elongation factor G 1 (700 aa).

The tr-type G domain occupies 8 to 290 (ERYRNIGISA…AVIDYLPSPA (283 aa)). GTP contacts are provided by residues 17–24 (AHIDAGKT), 88–92 (DTPGH), and 142–145 (NKMD).

It belongs to the TRAFAC class translation factor GTPase superfamily. Classic translation factor GTPase family. EF-G/EF-2 subfamily.

It is found in the cytoplasm. Catalyzes the GTP-dependent ribosomal translocation step during translation elongation. During this step, the ribosome changes from the pre-translocational (PRE) to the post-translocational (POST) state as the newly formed A-site-bound peptidyl-tRNA and P-site-bound deacylated tRNA move to the P and E sites, respectively. Catalyzes the coordinated movement of the two tRNA molecules, the mRNA and conformational changes in the ribosome. This chain is Elongation factor G 1, found in Bordetella bronchiseptica (strain ATCC BAA-588 / NCTC 13252 / RB50) (Alcaligenes bronchisepticus).